Here is a 512-residue protein sequence, read N- to C-terminus: Putative aldehyde-dehydrogenase-like protein y4uC (512 aa).

The interval 14–41 is disordered; that stretch reads MKPERGRRSPLPRRPTRPPDERSSGIGN. Residue 266–271 participates in NADP(+) binding; the sequence is GGFATG. Active-site residues include glutamate 286 and cysteine 320.

This sequence belongs to the aldehyde dehydrogenase family.

It functions in the pathway amino-acid degradation; 4-aminobutanoate degradation. Functionally, could be a succinate-semialdehyde dehydrogenase (NADP(+)). This chain is Putative aldehyde-dehydrogenase-like protein y4uC, found in Sinorhizobium fredii (strain NBRC 101917 / NGR234).